The chain runs to 55 residues: Mitochondrial import receptor subunit TOM7 homolog (55 aa).

Residues 1-20 (MVKLSKEAKQRLQQLFKGGQ) are Cytoplasmic-facing. A helical membrane pass occupies residues 21-40 (FAIRWGFIPLVIYLGFTRGA). Residues 41 to 55 (DPGMPEPSVLSLLWG) are Mitochondrial intermembrane-facing.

Belongs to the Tom7 family. Forms part of the preprotein translocase complex of the outer mitochondrial membrane (TOM complex) which consists of at least 7 different proteins (TOMM5, TOMM6, TOMM7, TOMM20, TOMM22, TOMM40 and TOMM70).

The protein resides in the mitochondrion outer membrane. In terms of biological role, required for assembly and stability of the TOM complex. Positive regulator of PRKN translocation to damaged mitochondria. Acts probably by stabilizing PINK1 on the outer membrane of depolarized mitochondria. This Mus musculus (Mouse) protein is Mitochondrial import receptor subunit TOM7 homolog (Tomm7).